A 357-amino-acid chain; its full sequence is 3-dehydroquinate synthase (357 aa).

NAD(+) contacts are provided by residues 104–108, 128–129, Lys141, and 168–171; these read GVVGD, TT, and FLET. Positions 183, 243, and 260 each coordinate Zn(2+).

Belongs to the sugar phosphate cyclases superfamily. Dehydroquinate synthase family. NAD(+) serves as cofactor. Requires Co(2+) as cofactor. It depends on Zn(2+) as a cofactor.

The protein localises to the cytoplasm. It catalyses the reaction 7-phospho-2-dehydro-3-deoxy-D-arabino-heptonate = 3-dehydroquinate + phosphate. It participates in metabolic intermediate biosynthesis; chorismate biosynthesis; chorismate from D-erythrose 4-phosphate and phosphoenolpyruvate: step 2/7. Functionally, catalyzes the conversion of 3-deoxy-D-arabino-heptulosonate 7-phosphate (DAHP) to dehydroquinate (DHQ). The protein is 3-dehydroquinate synthase of Streptococcus pyogenes serotype M3 (strain ATCC BAA-595 / MGAS315).